The following is a 340-amino-acid chain: Flavonoid 7-O-methyltransferase 1 (340 aa).

Aspartate 207 serves as a coordination point for S-adenosyl-L-methionine. The active-site Proton acceptor is histidine 245.

This sequence belongs to the class I-like SAM-binding methyltransferase superfamily. Cation-independent O-methyltransferase family. Homodimer. As to expression, expressed in leaves.

The enzyme catalyses (2S)-naringenin + S-adenosyl-L-methionine = (2S)-sakuranetin + S-adenosyl-L-homocysteine + H(+). It catalyses the reaction scutellarein + S-adenosyl-L-methionine = scutellarein 7-methyl ether + S-adenosyl-L-homocysteine. It carries out the reaction apigenin + S-adenosyl-L-methionine = genkwanin + S-adenosyl-L-homocysteine + H(+). The catalysed reaction is luteolin + S-adenosyl-L-methionine = luteolin 7-methyl ether + S-adenosyl-L-homocysteine + H(+). The enzyme catalyses chrysoeriol + S-adenosyl-L-methionine = velutin + S-adenosyl-L-homocysteine. It catalyses the reaction diosmetin + S-adenosyl-L-methionine = luteolin 4',7-dimethyl ether + S-adenosyl-L-homocysteine. It carries out the reaction acacetin + S-adenosyl-L-methionine = apigenin 4',7-dimethyl ether + S-adenosyl-L-homocysteine. The catalysed reaction is scutellarein 4'-methyl ether + S-adenosyl-L-methionine = ladanein + S-adenosyl-L-homocysteine. It participates in flavonoid metabolism. In terms of biological role, flavonoid 7-O-methyltransferase involved in the biosynthesis of polymethoxylated flavonoids natural products such as nevadensin and salvigenin, aroma compounds which contribute to the flavor of sweet basil, and exhibit pharmacological activities such as anti-allergic, anti-oxidant, antibacterial, anti-proliferative, and anti-inflammatory effects. Catalyzes S-adenosylmethionine-dependent regioselective 7-O-methylation of flavonoids; active on various hydroxylated flavonoid substrates, including apigenin (API) and luteolin (LUT), and, with a lower efficiency, scutellarein (SCU), naringenin (NAR), chrysoeriol (CHRYS), diosmetin (DIOS), acacetin (ACA) and scutellarein-7-methyl ether (SCU7Me). This chain is Flavonoid 7-O-methyltransferase 1, found in Ocimum basilicum (Sweet basil).